The chain runs to 561 residues: Zinc finger protein with KRAB and SCAN domains 1 (561 aa).

The interval 1 to 51 (MMTAESRETTGLSPQAAQEKDGIVIVKVEEEDEEDHMWGQDSSLQETPPPD) is disordered. The residue at position 13 (serine 13) is a Phosphoserine. Lysine 27 is covalently cross-linked (Glycyl lysine isopeptide (Lys-Gly) (interchain with G-Cter in SUMO2)). The 83-residue stretch at 56 to 138 (RQRFRRFCYQ…TLLEDLELDL (83 aa)) folds into the SCAN box domain. Residues 163–187 (VQESSSFDHHETAQSHFKHSSRKPR) form a disordered region. Positions 178 to 187 (HFKHSSRKPR) are enriched in basic residues. Residues lysine 180 and lysine 226 each participate in a glycyl lysine isopeptide (Lys-Gly) (interchain with G-Cter in SUMO2) cross-link. In terms of domain architecture, KRAB spans 225 to 304 (VKIEDMAVSL…QKEFGEKREQ (80 aa)). Positions 260 to 275 (NVFSQGSENRNGNEST) are enriched in polar residues. The interval 260–372 (NVFSQGSENR…NTPEEAPSGA (113 aa)) is disordered. Composition is skewed to basic and acidic residues over residues 276-286 (SKAEVKEDSTS) and 294-349 (FQKE…EKGK). Glycyl lysine isopeptide (Lys-Gly) (interchain with G-Cter in SUMO2) cross-links involve residues lysine 277, lysine 296, lysine 301, and lysine 336. A compositionally biased stretch (polar residues) spans 355–365 (FSLSANFNNTP). Lysine 373 is covalently cross-linked (Glycyl lysine isopeptide (Lys-Gly) (interchain with G-Cter in SUMO2)). C2H2-type zinc fingers lie at residues 375 to 397 (HRCDECGKCFTRSSSLIRHKIIH), 403 to 425 (YECNECGKAFSLNSNLVLHQRIH), 431 to 453 (HECNECGKAFSHSSNLILHQRIH), 459 to 481 (YECNECGKAFSQSSDLTKHQRIH), 487 to 509 (YECSECGKAFNRNSYLILHRRIH), and 515 to 537 (YKCTKCGKAFTRSSTLTLHHRIH). Glycyl lysine isopeptide (Lys-Gly) (interchain with G-Cter in SUMO2) cross-links involve residues lysine 410, lysine 438, and lysine 476. A Glycyl lysine isopeptide (Lys-Gly) (interchain with G-Cter in SUMO2) cross-link involves residue lysine 558.

This sequence belongs to the krueppel C2H2-type zinc-finger protein family.

It localises to the nucleus. May be involved in transcriptional regulation. The chain is Zinc finger protein with KRAB and SCAN domains 1 (Zkscan1) from Mus musculus (Mouse).